Reading from the N-terminus, the 174-residue chain is Interleukin-10 (174 aa).

A signal peptide spans 1–16 (MPTWMLLFCLLCVTSS). An N-linked (GlcNAc...) asparagine glycan is attached at Asn-17. Cystine bridges form between Cys-26-Cys-122 and Cys-76-Cys-128.

This sequence belongs to the IL-10 family. Homodimer. Interacts with IL10RA and IL10RB.

It localises to the secreted. Functionally, major immune regulatory cytokine that acts on many cells of the immune system where it has profound anti-inflammatory functions, limiting excessive tissue disruption caused by inflammation. Mechanistically, IL10 binds to its heterotetrameric receptor comprising IL10RA and IL10RB leading to JAK1 and STAT2-mediated phosphorylation of STAT3. In turn, STAT3 translocates to the nucleus where it drives expression of anti-inflammatory mediators. Targets antigen-presenting cells (APCs) such as macrophages and monocytes and inhibits their release of pro-inflammatory cytokines including granulocyte-macrophage colony-stimulating factor /GM-CSF, granulocyte colony-stimulating factor/G-CSF, IL-1 alpha, IL-1 beta, IL-6, IL-8 and TNF-alpha. Also interferes with antigen presentation by reducing the expression of MHC-class II and co-stimulatory molecules, thereby inhibiting their ability to induce T cell activation. In addition, controls the inflammatory response of macrophages by reprogramming essential metabolic pathways including mTOR signaling. This Trichosurus vulpecula (Brush-tailed possum) protein is Interleukin-10 (IL10).